Consider the following 338-residue polypeptide: Lipoate-protein ligase A (338 aa).

A BPL/LPL catalytic domain is found at 29–216 (SPNQRVLFLW…AFFAYYDEQV (188 aa)). ATP contacts are provided by residues arginine 71, 76-79 (GAVF), and lysine 134. Residue lysine 134 participates in (R)-lipoate binding.

It belongs to the LplA family. Monomer.

Its subcellular location is the cytoplasm. It catalyses the reaction L-lysyl-[lipoyl-carrier protein] + (R)-lipoate + ATP = N(6)-[(R)-lipoyl]-L-lysyl-[lipoyl-carrier protein] + AMP + diphosphate + H(+). It functions in the pathway protein modification; protein lipoylation via exogenous pathway; protein N(6)-(lipoyl)lysine from lipoate: step 1/2. It participates in protein modification; protein lipoylation via exogenous pathway; protein N(6)-(lipoyl)lysine from lipoate: step 2/2. Catalyzes both the ATP-dependent activation of exogenously supplied lipoate to lipoyl-AMP and the transfer of the activated lipoyl onto the lipoyl domains of lipoate-dependent enzymes. The polypeptide is Lipoate-protein ligase A (Yersinia pseudotuberculosis serotype O:1b (strain IP 31758)).